A 34-amino-acid chain; its full sequence is Photosystem II reaction center protein Psb30 (34 aa).

The helical transmembrane segment at 6–26 (VIGQLLSATLIVLAGPAVIFV) threads the bilayer.

The protein belongs to the Psb30/Ycf12 family. PSII is composed of 1 copy each of membrane proteins PsbA, PsbB, PsbC, PsbD, PsbE, PsbF, PsbH, PsbI, PsbJ, PsbK, PsbL, PsbM, PsbT, PsbX, PsbY, PsbZ, Psb30/Ycf12, peripheral proteins of the oxygen-evolving complex and a large number of cofactors. It forms dimeric complexes.

The protein resides in the plastid. It is found in the chloroplast thylakoid membrane. In terms of biological role, a core subunit of photosystem II (PSII), probably helps stabilize the reaction center. The protein is Photosystem II reaction center protein Psb30 of Heterosigma akashiwo (strain NIES-293 / 8280G21-1).